The following is a 122-amino-acid chain: Large ribosomal subunit protein uL14 (122 aa).

Belongs to the universal ribosomal protein uL14 family. In terms of assembly, part of the 50S ribosomal subunit. Forms a cluster with proteins L3 and L19. In the 70S ribosome, L14 and L19 interact and together make contacts with the 16S rRNA in bridges B5 and B8.

Functionally, binds to 23S rRNA. Forms part of two intersubunit bridges in the 70S ribosome. The chain is Large ribosomal subunit protein uL14 from Sinorhizobium fredii (strain NBRC 101917 / NGR234).